A 123-amino-acid chain; its full sequence is Small ribosomal subunit protein uS13 (123 aa).

The tract at residues 95-123 (GLPVRGQRTKTNARTRKGPIKTVGAKRKK) is disordered.

This sequence belongs to the universal ribosomal protein uS13 family. As to quaternary structure, part of the 30S ribosomal subunit. Forms a loose heterodimer with protein S19. Forms two bridges to the 50S subunit in the 70S ribosome.

Located at the top of the head of the 30S subunit, it contacts several helices of the 16S rRNA. In the 70S ribosome it contacts the 23S rRNA (bridge B1a) and protein L5 of the 50S subunit (bridge B1b), connecting the 2 subunits; these bridges are implicated in subunit movement. Contacts the tRNAs in the A and P-sites. This Desulfitobacterium hafniense (strain DSM 10664 / DCB-2) protein is Small ribosomal subunit protein uS13.